Reading from the N-terminus, the 61-residue chain is U-stichotoxin-Hcr1a (61 aa).

The N-terminal stretch at 1–21 (MKPAIFLMLFVAMFLISEGEG) is a signal peptide. Residues 22–31 (FKPKDAPQER) constitute a propeptide that is removed on maturation. P36 carries the post-translational modification Hydroxyproline. 2 cysteine pairs are disulfide-bonded: C41-C53 and C44-C59.

This sequence belongs to the Hau1a/HC18/HC19 family.

It localises to the secreted. The protein localises to the nematocyst. In terms of biological role, toxin that is lethal to crab. Does not produce the typical symptoms associated with sodium channel toxins in crabs, suggesting that it likely does not act on sodium channels. The sequence is that of U-stichotoxin-Hcr1a from Radianthus crispa (Leathery sea anemone).